The chain runs to 70 residues: NADH-ubiquinone oxidoreductase chain 3 (70 aa).

The chain crosses the membrane as a helical span at residues 42-62 (FFVITLIFLIFDVEIYLLLPM).

Belongs to the complex I subunit 3 family.

It is found in the mitochondrion membrane. It catalyses the reaction a ubiquinone + NADH + 5 H(+)(in) = a ubiquinol + NAD(+) + 4 H(+)(out). Functionally, core subunit of the mitochondrial membrane respiratory chain NADH dehydrogenase (Complex I) that is believed to belong to the minimal assembly required for catalysis. Complex I functions in the transfer of electrons from NADH to the respiratory chain. The immediate electron acceptor for the enzyme is believed to be ubiquinone. The polypeptide is NADH-ubiquinone oxidoreductase chain 3 (ND3) (Artemia salina (Brine shrimp)).